A 185-amino-acid chain; its full sequence is Large ribosomal subunit protein uL5 (185 aa).

Belongs to the universal ribosomal protein uL5 family. As to quaternary structure, part of the 50S ribosomal subunit; part of the 5S rRNA/L5/L18/L25 subcomplex. Contacts the 5S rRNA and the P site tRNA. Forms a bridge to the 30S subunit in the 70S ribosome.

In terms of biological role, this is one of the proteins that bind and probably mediate the attachment of the 5S RNA into the large ribosomal subunit, where it forms part of the central protuberance. In the 70S ribosome it contacts protein S13 of the 30S subunit (bridge B1b), connecting the 2 subunits; this bridge is implicated in subunit movement. Contacts the P site tRNA; the 5S rRNA and some of its associated proteins might help stabilize positioning of ribosome-bound tRNAs. This Bartonella tribocorum (strain CIP 105476 / IBS 506) protein is Large ribosomal subunit protein uL5.